The chain runs to 648 residues: Zinc finger protein grt1 (648 aa).

Residues 13-42 (ACENCRKRKVKCSGGDVCFECQKYNENCVY) constitute a DNA-binding region (zn(2)-C6 fungal-type).

Monomer.

The protein localises to the nucleus. Functionally, may be involved in the facilitation of anaphase progression in mitosis. The protein is Zinc finger protein grt1 (grt1) of Schizosaccharomyces pombe (strain 972 / ATCC 24843) (Fission yeast).